The chain runs to 31 residues: Cytochrome b6-f complex subunit 8 (31 aa).

Residues 5 to 25 traverse the membrane as a helical segment; it reads IVSLAWAALMVVFTFSLSLVV.

The protein belongs to the PetN family. The 4 large subunits of the cytochrome b6-f complex are cytochrome b6, subunit IV (17 kDa polypeptide, PetD), cytochrome f and the Rieske protein, while the 4 small subunits are PetG, PetL, PetM and PetN. The complex functions as a dimer.

The protein localises to the plastid. The protein resides in the chloroplast thylakoid membrane. In terms of biological role, component of the cytochrome b6-f complex, which mediates electron transfer between photosystem II (PSII) and photosystem I (PSI), cyclic electron flow around PSI, and state transitions. In Cicer arietinum (Chickpea), this protein is Cytochrome b6-f complex subunit 8.